Reading from the N-terminus, the 721-residue chain is Translation initiation factor eIF2B subunit epsilon (721 aa).

The span at 1-13 shows a compositional bias: low complexity; it reads MAAPVVAPPGVVV. Positions 1–40 are disordered; sequence MAAPVVAPPGVVVSRANKRSGAGPGGSGGGGARGAEEEPP. An N-acetylalanine modification is found at Ala2. An Omega-N-methylarginine modification is found at Arg19. The span at 22–33 shows a compositional bias: gly residues; the sequence is AGPGGSGGGGAR. Ser27 is modified (phosphoserine). Glycyl lysine isopeptide (Lys-Gly) (interchain with G-Cter in ubiquitin) cross-links involve residues Lys61 and Lys103. A Phosphoserine modification is found at Ser130. Glycyl lysine isopeptide (Lys-Gly) (interchain with G-Cter in ubiquitin) cross-links involve residues Lys141 and Lys217. Residue Thr322 is modified to Phosphothreonine. Disordered stretches follow at residues 444–483 and 523–547; these read PEGS…MKGY and EESE…SPQM. A phosphoserine mark is found at Ser450, Ser466, Ser469, Ser532, and Ser540. 2 stretches are compositionally biased toward acidic residues: residues 456 to 471 and 523 to 537; these read AEED…DSGA and EESE…DSEE. One can recognise a W2 domain in the interval 543–720; sequence GSPQMDDIKV…KEAEEESSED (178 aa). Ser544 carries the post-translational modification Phosphoserine; by DYRK2. A Phosphoserine modification is found at Ser717.

The protein belongs to the eIF-2B gamma/epsilon subunits family. Component of the translation initiation factor 2B (eIF2B) complex which is a heterodecamer of two sets of five different subunits: alpha, beta, gamma, delta and epsilon. Subunits alpha, beta and delta comprise a regulatory subcomplex and subunits epsilon and gamma comprise a catalytic subcomplex. Within the complex, the hexameric regulatory complex resides at the center, with the two heterodimeric catalytic subcomplexes bound on opposite sides. In terms of processing, phosphorylated at Ser-544 by DYRK2; this is required for subsequent phosphorylation by GSK3B. Phosphorylated on serine and threonine residues by GSK3B; phosphorylation inhibits its function. Post-translationally, polyubiquitinated, probably by NEDD4.

The protein localises to the cytoplasm. Its subcellular location is the cytosol. Activated by the chemical integrated stress response (ISR) inhibitor ISRIB which stimulates guanine nucleotide exchange factor activity for both phosphorylated and unphosphorylated eIF2. Functionally, acts as a component of the translation initiation factor 2B (eIF2B) complex, which catalyzes the exchange of GDP for GTP on eukaryotic initiation factor 2 (eIF2) gamma subunit. Its guanine nucleotide exchange factor activity is repressed when bound to eIF2 complex phosphorylated on the alpha subunit, thereby limiting the amount of methionyl-initiator methionine tRNA available to the ribosome and consequently global translation is repressed. This chain is Translation initiation factor eIF2B subunit epsilon (EIF2B5), found in Homo sapiens (Human).